The primary structure comprises 206 residues: Thiamine-phosphate synthase (206 aa).

Residues 35-39 (QLRHK) and Asn67 contribute to the 4-amino-2-methyl-5-(diphosphooxymethyl)pyrimidine site. 2 residues coordinate Mg(2+): Asp68 and Asp87. Ser106 lines the 4-amino-2-methyl-5-(diphosphooxymethyl)pyrimidine pocket. 132–134 (TGS) is a binding site for 2-[(2R,5Z)-2-carboxy-4-methylthiazol-5(2H)-ylidene]ethyl phosphate. Residue Lys135 coordinates 4-amino-2-methyl-5-(diphosphooxymethyl)pyrimidine. Gly163 is a binding site for 2-[(2R,5Z)-2-carboxy-4-methylthiazol-5(2H)-ylidene]ethyl phosphate.

The protein belongs to the thiamine-phosphate synthase family. Mg(2+) serves as cofactor.

The enzyme catalyses 2-[(2R,5Z)-2-carboxy-4-methylthiazol-5(2H)-ylidene]ethyl phosphate + 4-amino-2-methyl-5-(diphosphooxymethyl)pyrimidine + 2 H(+) = thiamine phosphate + CO2 + diphosphate. The catalysed reaction is 2-(2-carboxy-4-methylthiazol-5-yl)ethyl phosphate + 4-amino-2-methyl-5-(diphosphooxymethyl)pyrimidine + 2 H(+) = thiamine phosphate + CO2 + diphosphate. It carries out the reaction 4-methyl-5-(2-phosphooxyethyl)-thiazole + 4-amino-2-methyl-5-(diphosphooxymethyl)pyrimidine + H(+) = thiamine phosphate + diphosphate. The protein operates within cofactor biosynthesis; thiamine diphosphate biosynthesis; thiamine phosphate from 4-amino-2-methyl-5-diphosphomethylpyrimidine and 4-methyl-5-(2-phosphoethyl)-thiazole: step 1/1. Condenses 4-methyl-5-(beta-hydroxyethyl)thiazole monophosphate (THZ-P) and 2-methyl-4-amino-5-hydroxymethyl pyrimidine pyrophosphate (HMP-PP) to form thiamine monophosphate (TMP). The chain is Thiamine-phosphate synthase from Chlorobium phaeobacteroides (strain DSM 266 / SMG 266 / 2430).